A 190-amino-acid polypeptide reads, in one-letter code: Interferon alpha-9 (190 aa).

A signal peptide spans 1–23 (MARPFAFLMVLVVISYWSTCSLG). 2 cysteine pairs are disulfide-bonded: cysteine 24–cysteine 122 and cysteine 52–cysteine 162. The N-linked (GlcNAc...) asparagine glycan is linked to asparagine 101.

Belongs to the alpha/beta interferon family.

The protein localises to the secreted. Its function is as follows. Produced by macrophages, IFN-alpha have antiviral activities. Interferon stimulates the production of two enzymes: a protein kinase and an oligoadenylate synthetase. This chain is Interferon alpha-9 (Ifna9), found in Mus musculus (Mouse).